The sequence spans 139 residues: Large-conductance mechanosensitive channel (139 aa).

3 helical membrane-spanning segments follow: residues 10 to 30 (FAVK…AAFG), 40 to 60 (VIMP…YYIA), and 80 to 100 (LAYG…FIIF).

Belongs to the MscL family. In terms of assembly, homopentamer.

Its subcellular location is the cell inner membrane. Channel that opens in response to stretch forces in the membrane lipid bilayer. May participate in the regulation of osmotic pressure changes within the cell. This Janthinobacterium sp. (strain Marseille) (Minibacterium massiliensis) protein is Large-conductance mechanosensitive channel.